A 997-amino-acid chain; its full sequence is Frequency clock protein (997 aa).

7 disordered regions span residues 1–153 (MADS…HSSS), 214–311 (FAAS…LLPH), 381–447 (GENP…DLDP), 524–590 (SSDG…SRSP), 665–694 (DLSG…GDEA), 889–908 (EESF…FSDN), and 975–997 (SSVA…VSSS). Residues 74–94 (GESNDTGQSDPKSWFDQSNRN) are compositionally biased toward polar residues. Residues 115–125 (KETDSSNEDSR) are compositionally biased toward basic and acidic residues. The span at 138–152 (DTQTQGFRATVAHSS) shows a compositional bias: polar residues. Residues 227–237 (QRRKAGRHGKA) show a composition bias toward basic residues. Over residues 239 to 261 (HSSGVSLSKHDSSSSSRSRPVDS) the composition is skewed to low complexity. Over residues 264 to 275 (ASMSTGRSSHAA) the composition is skewed to polar residues. The segment covering 277-294 (SSGPSLGRPSLSSKSTSS) has biased composition (low complexity). Over residues 391-402 (KGATSASNSGGD) the composition is skewed to polar residues. Positions 410–421 (VTAGGDGNGSGG) are enriched in gly residues. A compositionally biased stretch (basic and acidic residues) spans 438-447 (RPTRPRDLDP). The Nuclear localization signal signature appears at 569–573 (RKKQK). Over residues 675 to 688 (PTEQMTATGEQEAS) the composition is skewed to polar residues. A compositionally biased stretch (polar residues) spans 986 to 997 (GYSSSMEDVSSS).

It belongs to the FRQ family.

It is found in the nucleus. Its function is as follows. Circadian clock component involved in the generation of biological rhythms, in particular in rhythm stability, period length, and temperature compensation. Behaves as a negative element in circadian transcriptional loop. The protein is Frequency clock protein (FRQ) of Sordaria fimicola.